Here is a 177-residue protein sequence, read N- to C-terminus: Bifunctional protein PyrR (177 aa).

The PRPP-binding motif lies at 99 to 111; it reads LVLIDDVIYKGRT.

It belongs to the purine/pyrimidine phosphoribosyltransferase family. PyrR subfamily.

The catalysed reaction is UMP + diphosphate = 5-phospho-alpha-D-ribose 1-diphosphate + uracil. Regulates the transcription of the pyrimidine nucleotide (pyr) operon in response to exogenous pyrimidines. Functionally, also displays a weak uracil phosphoribosyltransferase activity which is not physiologically significant. This Picosynechococcus sp. (strain ATCC 27264 / PCC 7002 / PR-6) (Agmenellum quadruplicatum) protein is Bifunctional protein PyrR.